The primary structure comprises 130 residues: Small ribosomal subunit protein uS9 (130 aa).

The protein belongs to the universal ribosomal protein uS9 family.

The sequence is that of Small ribosomal subunit protein uS9 from Saccharophagus degradans (strain 2-40 / ATCC 43961 / DSM 17024).